Here is a 325-residue protein sequence, read N- to C-terminus: Aspartate carbamoyltransferase catalytic subunit (325 aa).

2 residues coordinate carbamoyl phosphate: Arg64 and Thr65. Lys92 provides a ligand contact to L-aspartate. Carbamoyl phosphate is bound by residues Arg114, His142, and Gln145. L-aspartate is bound by residues Arg176 and Arg230. Carbamoyl phosphate contacts are provided by Gly271 and Pro272.

The protein belongs to the aspartate/ornithine carbamoyltransferase superfamily. ATCase family. Heterododecamer (2C3:3R2) of six catalytic PyrB chains organized as two trimers (C3), and six regulatory PyrI chains organized as three dimers (R2).

It catalyses the reaction carbamoyl phosphate + L-aspartate = N-carbamoyl-L-aspartate + phosphate + H(+). The protein operates within pyrimidine metabolism; UMP biosynthesis via de novo pathway; (S)-dihydroorotate from bicarbonate: step 2/3. Its function is as follows. Catalyzes the condensation of carbamoyl phosphate and aspartate to form carbamoyl aspartate and inorganic phosphate, the committed step in the de novo pyrimidine nucleotide biosynthesis pathway. This chain is Aspartate carbamoyltransferase catalytic subunit, found in Nitratidesulfovibrio vulgaris (strain DSM 19637 / Miyazaki F) (Desulfovibrio vulgaris).